The primary structure comprises 591 residues: MDQYEVLEQIGKGAFGSALLVRHKLEKKKYVLKKIRLARQTDRTRRSAHQEMQLIATVRNPFIVEYKDSWVEKGCYVCIVIGYCEGGDMAEAIKRANGTYFSEEKLCKWLVQLLMALDYLHANHILHRDVKCSNIFIARDQSIRLGDFGLAKILTSDDLASSVVGTPSYMCPELLADIPYGTKSDIWSLGCCIYEMTALRPAFKAFDMQALINKITKSIVSPLPTKYSGAFRGLIKSMLRKSPEHRPSAAQLLKHPQLQPYVLQVQLKSSPTRNILPIHQSLTDKVKKMTFPSDVVDSARRRMARRNSLGNERTVTFSKPSPERNSVSSTRSIKEYTTTQSVKGLSVDSSEAGDEVTSKAIITKTSSILRTPKSLPAKTYTARNQLEPPKTSYNRTYRSELPSKTTPNKIARPARRASLPLSTYETPTKRSISILEQLDSPDVSVNAPRIDRIAEFPLASSEDPLLPIHNKLSPGHGSCSTPPFINRSITKDKCTIQVLRTDGDNGSDSSGRNATAASSRGSNDSRQQRFDTSSFQQRAEALEGLLEFSAQLLQQERYEELGILLKPFGPEKASPRETAIWLTKSFKETAS.

The Protein kinase domain occupies 4 to 258 (YEVLEQIGKG…AAQLLKHPQL (255 aa)). Residues 10 to 18 (IGKGAFGSA) and K33 contribute to the ATP site. Residue D129 is the Proton acceptor of the active site. Disordered regions lie at residues 309–331 (LGNE…SSTR), 382–408 (ARNQ…TTPN), and 500–534 (RTDG…DTSS). Composition is skewed to polar residues over residues 391–408 (TSYN…TTPN) and 504–534 (DNGS…DTSS).

This sequence belongs to the protein kinase superfamily. NEK Ser/Thr protein kinase family. NIMA subfamily. As to expression, expressed in anthers, pistils and leaves.

The enzyme catalyses L-seryl-[protein] + ATP = O-phospho-L-seryl-[protein] + ADP + H(+). It catalyses the reaction L-threonyl-[protein] + ATP = O-phospho-L-threonyl-[protein] + ADP + H(+). Its function is as follows. May be involved in plant development processes. The sequence is that of Serine/threonine-protein kinase Nek2 from Oryza sativa subsp. japonica (Rice).